The sequence spans 636 residues: uncharacterized protein (636 aa).

The zn(2)-C6 fungal-type DNA-binding region spans 10–36; the sequence is CLACRRKKVKCNRQYPCTRCLKYGEAC. The segment covering 556–580 has biased composition (polar residues); it reads NSQSTSEFVSPISDTENGSSSQQVS. Residues 556–581 are disordered; sequence NSQSTSEFVSPISDTENGSSSQQVSE.

It is found in the cytoplasm. It localises to the nucleus. This is an uncharacterized protein from Schizosaccharomyces pombe (strain 972 / ATCC 24843) (Fission yeast).